The following is a 648-amino-acid chain: MEALLQGLQRQDRMGALQDSCEAELQELMKQIDIMLDHKRSQWEAETETMKTRLELKEQELNCALDSEERLNQEVRRLRQQLIQQEEETQNKTTQYEAQLSGFKEELNRLKKSYEKVQKKHLRSEMKAKAEEERSEVSRLTRRLEEFRQRSLDWEKQRLLYQQQLSGLEAQRKTLIEQTEMYQQQSHNRKQMLEQTNLVGRSELQNLSGQLHRANDSLCAKEEELETLKIQLRCAVEGQKRAEHETELSKQAVQALKEKAELRATLQAHTEFLQGSRVQKHELLPEGYRGSEVLRENNSIRSLEERLQETGQVGGETEVEAIRSKLSVSRMNEQRLQAEVTCLEDSVESVTSQCQLLAKELKGKEEYLHGVKEDHQKCLSENKKLKGQLSQAELTHKSVLDGMRKEISQLTQELHQRDIRMASSAGIDWERKIKAERQRAEREAAEHRMSLNALENLRQENCRLSELLQTQEPDVAQALVNLEQANQRLQRELLQTQEKLELIAQRRESEIQNAVDSISQELLNKQEQELRIMQERLKVYEQEMQTFRSQQDAASSGSSLESIFSEVWKEQATGSPISAASVDSAIEPVEDLASSLPVPPTSPANAVASRFLQEEEQRSHELLQRLNAHIEELKQESQRTVEHFTQAR.

2 coiled-coil regions span residues 19-188 (DSCE…QSHN) and 222-555 (EEEL…DAAS). Phosphoserine; by atm and atr is present on Ser559. A coiled-coil region spans residues 611–644 (FLQEEEQRSHELLQRLNAHIEELKQESQRTVEHF).

This sequence belongs to the CEP63 family. Post-translationally, phosphorylation at Ser-559 by atm and atr promotes its delocalization from the centrosome and impairs its ability to promote centrosome dependent spindle assembly.

The protein resides in the cytoplasm. It localises to the cytoskeleton. It is found in the microtubule organizing center. The protein localises to the centrosome. Its subcellular location is the centriole. Functionally, required for normal spindle assembly. Plays a key role in mother-centriole-dependent centriole duplication. Plays a role in DNA damage response. Following DNA damage, such as double-strand breaks (DSBs), is removed from centrosomes; this leads to the inactivation of spindle assembly and delay in mitotic progression. This chain is Centrosomal protein of 63 kDa-B (cep63-b), found in Xenopus laevis (African clawed frog).